Consider the following 90-residue polypeptide: Putative regulatory protein cce_4590 (90 aa).

Belongs to the RemA family.

This is Putative regulatory protein cce_4590 from Crocosphaera subtropica (strain ATCC 51142 / BH68) (Cyanothece sp. (strain ATCC 51142)).